Reading from the N-terminus, the 93-residue chain is Large ribosomal subunit protein uL23cz/uL23cy (93 aa).

This sequence belongs to the universal ribosomal protein uL23 family. Part of the 50S ribosomal subunit.

It is found in the plastid. Its subcellular location is the chloroplast. In terms of biological role, binds to 23S rRNA. The chain is Large ribosomal subunit protein uL23cz/uL23cy (rpl23-A) from Panax ginseng (Korean ginseng).